A 404-amino-acid polypeptide reads, in one-letter code: Caspase-1 (404 aa).

Positions 1-91 (MADKVLKEKR…YLAGTLGLSA (91 aa)) constitute a CARD domain. Residues 1–119 (MADKVLKEKR…SFPAPQAVQD (119 aa)) constitute a propeptide that is removed on maturation. K134 is covalently cross-linked (Glycyl lysine isopeptide (Lys-Gly) (interchain with G-Cter in ubiquitin)). Catalysis depends on residues H237 and C285. Positions 298 to 316 (SVGVSGNLSLPTTEEFEDD) are cleaved as a propeptide — interdomain linker. S302 carries the phosphoserine modification.

It belongs to the peptidase C14A family. As to quaternary structure, heterotetramer that consists of two anti-parallel arranged heterodimers, each one formed by a 20 kDa (Caspase-1 subunit p20) and a 10 kDa (Caspase-1 subunit p10) subunit. May be a component of the inflammasome, a protein complex which also includes PYCARD, CARD8 and NLRP2 and whose function would be the activation of pro-inflammatory caspases. Component of the AIM2 PANoptosome complex, a multiprotein complex that drives inflammatory cell death (PANoptosis). Interacts with CARD8; interacts with the released C-terminus of CARD8 which forms an inflammasome and directly activates CASP1 to promote pyroptosis. Both the p10 and p20 subunits interact with MEFV. Interacts with CARD17P/INCA and CARD18. Interacts with SERPINB1; this interaction regulates CASP1 activity. In terms of assembly, heterotetramer that consists of two anti-parallel arranged heterodimers, each one formed by a 20 kDa (Caspase-1 subunit p20) and a 10 kDa (Caspase-1 subunit p10) subunit. Can form a heterodimer with isoform epsilon which then has an inhibitory effect. Heterotetramer that consists of two anti-parallel arranged heterodimers, each one formed by a 20 kDa (Caspase-1 subunit p20) and a 10 kDa (Caspase-1 subunit p10) subunit. As to quaternary structure, can form a heterodimer with Caspase-1 subunit p20 which then has an inhibitory effect. The two subunits are derived from the precursor sequence by an autocatalytic mechanism. In terms of processing, ubiquitinated via 'Lys-11'-linked polyubiquitination. Deubiquitinated by USP8. Post-translationally, cleavage in the interdomain linker region is required to induce pyroptosis. As to expression, expressed in larger amounts in spleen and lung. Detected in liver, heart, small intestine, colon, thymus, prostate, skeletal muscle, peripheral blood leukocytes, kidney and testis. No expression in the brain.

The protein resides in the cytoplasm. Its subcellular location is the cell membrane. It carries out the reaction Strict requirement for an Asp residue at position P1 and has a preferred cleavage sequence of Tyr-Val-Ala-Asp-|-.. Its activity is regulated as follows. (Microbial infection) Specifically inhibited by the cowpox virus Crma protein. Thiol protease involved in a variety of inflammatory processes by proteolytically cleaving other proteins, such as the precursors of the inflammatory cytokines interleukin-1 beta (IL1B) and interleukin 18 (IL18) as well as the pyroptosis inducer Gasdermin-D (GSDMD), into active mature peptides. Plays a key role in cell immunity as an inflammatory response initiator: once activated through formation of an inflammasome complex, it initiates a pro-inflammatory response through the cleavage of the two inflammatory cytokines IL1B and IL18, releasing the mature cytokines which are involved in a variety of inflammatory processes. Cleaves a tetrapeptide after an Asp residue at position P1. Also initiates pyroptosis, a programmed lytic cell death pathway, through cleavage of GSDMD. In contrast to cleavage of interleukin IL1B, recognition and cleavage of GSDMD is not strictly dependent on the consensus cleavage site but depends on an exosite interface on CASP1 that recognizes and binds the Gasdermin-D, C-terminal (GSDMD-CT) part. Cleaves and activates CASP7 in response to bacterial infection, promoting plasma membrane repair. Upon inflammasome activation, during DNA virus infection but not RNA virus challenge, controls antiviral immunity through the cleavage of CGAS, rendering it inactive. In apoptotic cells, cleaves SPHK2 which is released from cells and remains enzymatically active extracellularly. In terms of biological role, apoptosis inactive. This is Caspase-1 (CASP1) from Homo sapiens (Human).